Reading from the N-terminus, the 421-residue chain is Zinc metalloproteinase-disintegrin-like lachestatin-1 (421 aa).

A Peptidase M12B domain is found at 10 to 206 (KYVKLVLVAD…DMPQCILEKP (197 aa)). Disulfide bonds link C121–C201, C161–C185, and C163–C168. Position 146 (H146) interacts with Zn(2+). Residue E147 is part of the active site. Zn(2+) contacts are provided by H150 and H156. Residues 214 to 299 (PPVCGNYFVE…AECTDRFQRN (86 aa)) form the Disintegrin domain. V216, N219, F221, E223, E226, and D229 together coordinate Ca(2+). 14 cysteine pairs are disulfide-bonded: C217/C246, C228/C241, C230/C236, C240/C263, C254/C260, C259/C285, C272/C292, C279/C310, C303/C315, C322/C372, C337/C383, C350/C360, C367/C409, and C403/C414. A D/ECD-tripeptide motif is present at residues 278–280 (ECD). D280, M281, D283, D294, and R295 together coordinate Ca(2+). N-linked (GlcNAc...) asparagine glycosylation occurs at N312.

This sequence belongs to the venom metalloproteinase (M12B) family. P-III subfamily. P-IIIc sub-subfamily. Homodimer; disulfide-linked. Zn(2+) serves as cofactor. Expressed by the venom gland.

It localises to the secreted. Functionally, snake venom zinc metalloprotease that induces apoptosis in vascular endothelial cells (VEC), without degrading the extracellular matrix (it cannot cleave collagen) or inhibiting adhesion of VEC. Has also fibrinogenolytic and hemorrhagic activities. This chain is Zinc metalloproteinase-disintegrin-like lachestatin-1, found in Lachesis muta rhombeata (Bushmaster).